The primary structure comprises 640 residues: ATP-dependent rRNA helicase spb4 (640 aa).

A Q motif motif is present at residues 14–42; it reads WDAVTPALSEWVLEAMSSMGFTRMTPVQA. The region spanning 45–249 is the Helicase ATP-binding domain; sequence IPLFMAHKDV…RVGLRNPVKV (205 aa). 58–65 is a binding site for ATP; it reads AVTGSGKT. A DEAD box motif is present at residues 197–200; that stretch reads DEAD. The Helicase C-terminal domain maps to 283–437; that stretch reads ALKRIVSSVQ…SISFSDADAA (155 aa). Residues 521–629 are a coiled coil; it reads AYKDKQREKR…VAKAAGAKAD (109 aa). 2 disordered regions span residues 531–593 and 607–640; these read RKEL…EEEK and RKKNEEERRLRRAVAKAAGAKADGDDEEEFQGFD. Residues 577–593 are compositionally biased toward basic and acidic residues; sequence KSKQEKARWEKMTEEEK. Residues 630–640 show a composition bias toward acidic residues; the sequence is GDDEEEFQGFD.

Belongs to the DEAD box helicase family. DDX55/SPB4 subfamily. In terms of assembly, component of pre-60S ribosomal complexes.

Its subcellular location is the nucleus. It is found in the nucleolus. It catalyses the reaction ATP + H2O = ADP + phosphate + H(+). Its function is as follows. ATP-binding RNA helicase involved in the biogenesis of 60S ribosomal subunits. Binds 90S pre-ribosomal particles and dissociates from pre-60S ribosomal particles after processing of 27SB pre-rRNA. Required for the normal formation of 18S rRNA through the processing of pre-rRNAs at sites A0, A1 and A2, and the normal formation of 25S and 5.8S rRNAs through the processing of pre-rRNAs at sites C1 and C2. The sequence is that of ATP-dependent rRNA helicase spb4 from Aspergillus fumigatus (strain ATCC MYA-4609 / CBS 101355 / FGSC A1100 / Af293) (Neosartorya fumigata).